The chain runs to 1472 residues: MGGGHSALSGRSLDTFEKIRLRPNGKKKYQIKHLIWAGKEMERFGLHEKLLETKEGCQKIIEVLTPLEPTGSEGLKALFNLCCVIWCIHAEQKVKDTEEAVVTVKQHYHLVDKNEKAAKKKNETTAPPGGESRNYPVVNQNNAWVHQPLSPRTLNAWVKCVEEKRWGAEVVPMFQALSEGCLSYDVNQMLNVIGDHQGALQILKEVINEEAAEWDRTHRPPAGPLPAGQLRDPTGSDIAGTTSSIQEQIEWTFNANPRIDVGAQYRKWVILGLQKVVQMYNPQKVLDIRQGPKEPFQDYVDRFYKALRAEQAPQDVKNWMTQTLLIQNANPDCKLILKGLGMNPTLEEMLIACQGVGGPQHKAKLMVEMMSNGQNMVQVGPQKKGPRGPLKCFNCGKFGHMQRECKAPRQIKCFKCGKIGHMAKDCKNGQANFFRVWPLGRSETKKFCAIQRRHSWSGTNSPPNGNSLRSSKEAPPAVCREGTAPERGERTDKETEGERSGGCFLELPLWRRPMKRVIIEGTPVQALLDTGADDTIIQEKDLHFPPHKPWRSKVVGGIGGGIHVKEYQGVQVQLEDKIITGSILIGSTPINIIGRNILAQAGMKLVMGVLSSQIEETKVQLKEGKDGPKLKQWPLSREKIEALTEICKQMEEEGKLSRIGGENPYNTPVFAIKKKDKTQWRMLVDFRELNKATQDFFEVQLGIPHPAGLQKKKQITVIDIGDAYYSIPLCKEFRKYTAFTIPSVNNTGPGIRYQFNCLPQGWKGSPTIFQNTAANILEEIKRHTPGLEIVQYMDDLWLASDHDETRHNQQVDIVRKMLLEKGLETPDKKVQREPPWEWMGYKLHPNKWTINKIELPPLEGEWTVNKIQKVVGVLNWASQIYPGIKTKHTCAMLRGKKNLLEEIVWTEEAEAEYKNNQGIVQETQEGTYYDPLKELIATVQKQGEGQWTYQFTQEGAVLKVGRYAKQRETHTNDLRTLAHLVQKICKEALTIWGRLPRVQLPVDKKTWDMWWQDYWQVSWIPEWEFVSTPLLVKLWYSLVKEPIKGEDVYYVDGAASKVTKLGKAGYLSERGKSRIRELENTTNQQAELTAVKMALEDSGENVNIVTDSQYVMNILTACPQESNSPLVEQIIQALMKKRQVYLQWVPAHKGIGGNTEIDKLVSKGIRQILFLDRIEEAQDDHAKYHNNWRSMVQEFGLPNIVAKEIVAACPKCQIRGEPKHGQVDASIETWQMDCTHLEGKVIIVAVHVASGFIEAEVIPRETGKETAHFLLKLLARWPVKHLHTDNGPNFTSQNVAAVCWWGNIEHTTGIPYNPQSQGSVESMNRQLKEIISQIRDDCERLETAVQMATHIHNFKRKGGIGGISSAERLVNMLTTQLELNTLQNQIQKILNFKVYYREGRDPVWKGPARLIWKGEGAVVIKEGEDIKVVPRRKAKIIKDYGERKTMDSEGSMEGVREANKQMEGDSDLQDQE.

G2 carries N-myristoyl glycine; by host lipidation. Residues 16-22 carry the Nuclear export signal motif; sequence FEKIRLR. The Nuclear localization signal motif lies at 26 to 32; the sequence is KKKYQIK. Disordered stretches follow at residues 115–135 and 215–234; these read EKAA…SRNY and DRTH…RDPT. Phosphotyrosine; by host is present on Y135. CCHC-type zinc fingers lie at residues 390–407 and 411–428; these read LKCF…ECKA and IKCF…DCKN. The interval 454-500 is disordered; it reads HSWSGTNSPPNGNSLRSSKEAPPAVCREGTAPERGERTDKETEGERS. Residues 456–469 show a composition bias toward polar residues; sequence WSGTNSPPNGNSLR. A compositionally biased stretch (basic and acidic residues) spans 483-499; sequence TAPERGERTDKETEGER. In terms of domain architecture, Peptidase A2 spans 524–597; the sequence is VQALLDTGAD…TPINIIGRNI (74 aa). The active-site For protease activity; shared with dimeric partner is D529. The 191-residue stretch at 653-843 folds into the Reverse transcriptase domain; sequence EGKLSRIGGE…PPWEWMGYKL (191 aa). Positions 719, 794, and 795 each coordinate Mg(2+). The segment at 836-844 is RT 'primer grip'; sequence WEWMGYKLH. The Tryptophan repeat motif motif lies at 1007 to 1023; the sequence is WDMWWQDYWQVSWIPEW. An RNase H type-1 domain is found at 1043-1166; the sequence is IKGEDVYYVD…IDKLVSKGIR (124 aa). The Mg(2+) site is built by D1052, E1087, D1107, and D1158. The segment at 1172–1213 adopts an Integrase-type zinc-finger fold; sequence DRIEEAQDDHAKYHNNWRSMVQEFGLPNIVAKEIVAACPKCQ. H1181, H1185, C1209, and C1212 together coordinate Zn(2+). The Integrase catalytic domain occupies 1223-1373; sequence VDASIETWQM…SSAERLVNML (151 aa). Mg(2+)-binding residues include D1233 and D1285. A DNA-binding region (integrase-type) is located at residues 1392 to 1439; sequence FKVYYREGRDPVWKGPARLIWKGEGAVVIKEGEDIKVVPRRKAKIIKD. Residues 1440-1472 form a disordered region; it reads YGERKTMDSEGSMEGVREANKQMEGDSDLQDQE. The segment covering 1454 to 1463 has biased composition (basic and acidic residues); that stretch reads GVREANKQME.

As to quaternary structure, homotrimer. Interacts with gp41 (via C-terminus). Homodimer. The active site consists of two apposed aspartic acid residues. In terms of assembly, heterodimer of p66 RT and p51 RT (RT p66/p51). Heterodimerization of RT is essential for DNA polymerase activity. Despite the sequence identities, p66 RT and p51 RT have distinct folding. As to quaternary structure, homotetramer; may further associate as a homohexadecamer. Requires Mg(2+) as cofactor. Post-translationally, specific enzymatic cleavages by the viral protease yield mature proteins. The protease is released by autocatalytic cleavage. The polyprotein is cleaved during and after budding, this process is termed maturation. Proteolytic cleavage of p66 RT removes the RNase H domain to yield the p51 RT subunit. Capsid protein p24 is phosphorylated.

It is found in the virion. The protein resides in the host nucleus. The protein localises to the host cytoplasm. Its subcellular location is the host cell membrane. The catalysed reaction is Specific for a P1 residue that is hydrophobic, and P1' variable, but often Pro.. It carries out the reaction Endohydrolysis of RNA in RNA/DNA hybrids. Three different cleavage modes: 1. sequence-specific internal cleavage of RNA. Human immunodeficiency virus type 1 and Moloney murine leukemia virus enzymes prefer to cleave the RNA strand one nucleotide away from the RNA-DNA junction. 2. RNA 5'-end directed cleavage 13-19 nucleotides from the RNA end. 3. DNA 3'-end directed cleavage 15-20 nucleotides away from the primer terminus.. The enzyme catalyses 3'-end directed exonucleolytic cleavage of viral RNA-DNA hybrid.. It catalyses the reaction DNA(n) + a 2'-deoxyribonucleoside 5'-triphosphate = DNA(n+1) + diphosphate. The viral protease is inhibited by many synthetic protease inhibitors (PIs), such as amprenavir, atazanavir, indinavir, loprinavir, nelfinavir, ritonavir and saquinavir. RT can be inhibited either by nucleoside RT inhibitors (NRTIs) or by non nucleoside RT inhibitors (NNRTIs). NRTIs act as chain terminators, whereas NNRTIs inhibit DNA polymerization by binding a small hydrophobic pocket near the RT active site and inducing an allosteric change in this region. Classical NRTIs are abacavir, adefovir (PMEA), didanosine (ddI), lamivudine (3TC), stavudine (d4T), tenofovir (PMPA), zalcitabine (ddC), and zidovudine (AZT). Classical NNRTIs are atevirdine (BHAP U-87201E), delavirdine, efavirenz (DMP-266), emivirine (I-EBU), and nevirapine (BI-RG-587). The tritherapies used as a basic effective treatment of AIDS associate two NRTIs and one NNRTI. Use of protease inhibitors in tritherapy regimens permit more ambitious therapeutic strategies. Its function is as follows. Gag-Pol polyprotein and Gag polyprotein may regulate their own translation, by the binding genomic RNA in the 5'-UTR. At low concentration, Gag-Pol and Gag would promote translation, whereas at high concentration, the polyproteins encapsidate genomic RNA and then shut off translation. Matrix protein p17 has two main functions: in infected cell, it targets Gag and Gag-pol polyproteins to the plasma membrane via a multipartite membrane-binding signal, that includes its myristointegration complex. The myristoylation signal and the NLS exert conflicting influences its subcellular localization. The key regulation of these motifs might be phosphorylation of a portion of MA molecules on the C-terminal tyrosine at the time of virus maturation, by virion-associated cellular tyrosine kinase. Implicated in the release from host cell mediated by Vpu. In terms of biological role, capsid protein p24 forms the conical core that encapsulates the genomic RNA-nucleocapsid complex in the virion. The core is constituted by capsid protein hexamer subunits. The core is disassembled soon after virion entry. Interaction with host PPIA/CYPA protects the virus from restriction by host TRIM5-alpha and from an unknown antiviral activity in host cells. This capsid restriction by TRIM5 is one of the factors which restricts SIV to the simian species. Functionally, nucleocapsid protein p7 encapsulates and protects viral dimeric unspliced (genomic) RNA. Binds these RNAs through its zinc fingers. Facilitates rearangement of nucleic acid secondary structure during retrotranscription of genomic RNA. This capability is referred to as nucleic acid chaperone activity. Its function is as follows. The aspartyl protease mediates proteolytic cleavages of Gag and Gag-Pol polyproteins during or shortly after the release of the virion from the plasma membrane. Cleavages take place as an ordered, step-wise cascade to yield mature proteins. This process is called maturation. Displays maximal activity during the budding process just prior to particle release from the cell. Also cleaves Nef and Vif, probably concomitantly with viral structural proteins on maturation of virus particles. Hydrolyzes host EIF4GI and PABP1 in order to shut off the capped cellular mRNA translation. The resulting inhibition of cellular protein synthesis serves to ensure maximal viral gene expression and to evade host immune response. Reverse transcriptase/ribonuclease H (RT) is a multifunctional enzyme that converts the viral dimeric RNA genome into dsDNA in the cytoplasm, shortly after virus entry into the cell. This enzyme displays a DNA polymerase activity that can copy either DNA or RNA templates, and a ribonuclease H (RNase H) activity that cleaves the RNA strand of RNA-DNA heteroduplexes in a partially processive 3' to 5' endonucleasic mode. Conversion of viral genomic RNA into dsDNA requires many steps. A tRNA binds to the primer-binding site (PBS) situated at the 5'-end of the viral RNA. RT uses the 3' end of the tRNA primer to perform a short round of RNA-dependent minus-strand DNA synthesis. The reading proceeds through the U5 region and ends after the repeated (R) region which is present at both ends of viral RNA. The portion of the RNA-DNA heteroduplex is digested by the RNase H, resulting in a ssDNA product attached to the tRNA primer. This ssDNA/tRNA hybridizes with the identical R region situated at the 3' end of viral RNA. This template exchange, known as minus-strand DNA strong stop transfer, can be either intra- or intermolecular. RT uses the 3' end of this newly synthesized short ssDNA to perform the RNA-dependent minus-strand DNA synthesis of the whole template. RNase H digests the RNA template except for two polypurine tracts (PPTs) situated at the 5'-end and near the center of the genome. It is not clear if both polymerase and RNase H activities are simultaneous. RNase H can probably proceed both in a polymerase-dependent (RNA cut into small fragments by the same RT performing DNA synthesis) and a polymerase-independent mode (cleavage of remaining RNA fragments by free RTs). Secondly, RT performs DNA-directed plus-strand DNA synthesis using the PPTs that have not been removed by RNase H as primers. PPTs and tRNA primers are then removed by RNase H. The 3' and 5' ssDNA PBS regions hybridize to form a circular dsDNA intermediate. Strand displacement synthesis by RT to the PBS and PPT ends produces a blunt ended, linear dsDNA copy of the viral genome that includes long terminal repeats (LTRs) at both ends. In terms of biological role, integrase catalyzes viral DNA integration into the host chromosome, by performing a series of DNA cutting and joining reactions. This enzyme activity takes place after virion entry into a cell and reverse transcription of the RNA genome in dsDNA. The first step in the integration process is 3' processing. This step requires a complex comprising the viral genome, matrix protein, Vpr and integrase. This complex is called the pre-integration complex (PIC). The integrase protein removes 2 nucleotides from each 3' end of the viral DNA, leaving recessed CA OH's at the 3' ends. In the second step, the PIC enters cell nucleus. This process is mediated through integrase and Vpr proteins, and allows the virus to infect a non dividing cell. This ability to enter the nucleus is specific of lentiviruses, other retroviruses cannot and rely on cell division to access cell chromosomes. In the third step, termed strand transfer, the integrase protein joins the previously processed 3' ends to the 5' ends of strands of target cellular DNA at the site of integration. The 5'-ends are produced by integrase-catalyzed staggered cuts, 5 bp apart. A Y-shaped, gapped, recombination intermediate results, with the 5'-ends of the viral DNA strands and the 3' ends of target DNA strands remaining unjoined, flanking a gap of 5 bp. The last step is viral DNA integration into host chromosome. This involves host DNA repair synthesis in which the 5 bp gaps between the unjoined strands are filled in and then ligated. Since this process occurs at both cuts flanking the SIV genome, a 5 bp duplication of host DNA is produced at the ends of SIV integration. Alternatively, Integrase may catalyze the excision of viral DNA just after strand transfer, this is termed disintegration. In Simian immunodeficiency virus agm.grivet (isolate AGM gr-1) (SIV-agm.gri), this protein is Gag-Pol polyprotein (gag-pol).